Reading from the N-terminus, the 492-residue chain is Regulatory protein ViaA (492 aa).

The protein belongs to the ViaA family. Homodimer. Interacts with RavA.

It localises to the cytoplasm. Functionally, component of the RavA-ViaA chaperone complex, which may act on the membrane to optimize the function of some of the respiratory chains. ViaA stimulates the ATPase activity of RavA. The sequence is that of Regulatory protein ViaA from Pectobacterium carotovorum subsp. carotovorum (strain PC1).